A 423-amino-acid polypeptide reads, in one-letter code: 26S proteasome regulatory subunit 6A homolog (423 aa).

211 to 218 (GPPGTGKT) is an ATP binding site.

It belongs to the AAA ATPase family.

The protein localises to the cytoplasm. It is found in the nucleus. In terms of biological role, the 26S proteasome is involved in the ATP-dependent degradation of ubiquitinated proteins. The regulatory (or ATPase) complex confers ATP dependency and substrate specificity to the 26S complex. This is 26S proteasome regulatory subunit 6A homolog (TBP1) from Solanum lycopersicum (Tomato).